Reading from the N-terminus, the 274-residue chain is Penicillin-insensitive murein endopeptidase (274 aa).

A signal peptide spans 1 to 19 (MKKTAIALLAWFVSSASLA). Cystine bridges form between Cys-44–Cys-265, Cys-187–Cys-235, and Cys-216–Cys-223. Residues His-110, His-113, Asp-120, Asp-147, and His-150 each coordinate Zn(2+). Residues 225–274 (DQPLPPPGDGCGAELQSWFEPPKPGTTKPEKKTPPPLPPSCQALLDEHVL) form a disordered region.

The protein belongs to the peptidase M74 family. As to quaternary structure, dimer. Zn(2+) is required as a cofactor.

It localises to the periplasm. In terms of biological role, murein endopeptidase that cleaves the D-alanyl-meso-2,6-diamino-pimelyl amide bond that connects peptidoglycan strands. Likely plays a role in the removal of murein from the sacculus. The chain is Penicillin-insensitive murein endopeptidase from Salmonella paratyphi A (strain ATCC 9150 / SARB42).